Consider the following 635-residue polypeptide: MNQTQPYMDVHSSHLSSAQPYASHAATAGAMAHYPQYHQQPPVLQPASTYGPASSYSQYAYPSGVASSQTAPPPPSTSMSSQVPAQLLPLPVNSHTVTAPGYGNTTGTPMQGFVYDTTGQLAPPGAKPRVTATLWEDEGSLCYQVEAKGVCVARREDNHMINGTKLLNVAGMTRGRRDGILKSEKVRHVVKIGPMHLKGVWIPFERALEFANKEKITDLLYPLFVHNIGGLLYHPTNQTRTNMVVQESQQRRLEGPPSARTPQASQPPALHHHHSMQTSIPSQMPQPPTMSSQPGARPPLDRAHTFPTPPASASSLMGLSNQSSSYDWNNQGMNSGVPNTQPLSIDTTLSNTRSMPTTPATTPPGNNLQGMQSYQSQSGYDTSKPYYSTAPPSHPHYAPQYSLSQYGQPMPPHSYIKNEMAPPAGRAPGGQSETETSDVKPADRYSQSNGHVTAGAGESAPEHESEYVQHDNTGYGASRSSYTYTTNTSVGSLAGEHSQLTNDITGSPQQNGSGRMTPRTGGGPPPQWASGYASPRPTAASSLYNIVSDTRGSSNGAGSENYTVASNTAPTYSMGGSLGSGKRGREDDDMGRPDSQGDYESKRRRTNETTVGGPVGGVLLGLQPMKAGGAMPRRR.

Disordered stretches follow at residues 1-21 (MNQT…AQPY) and 63-82 (SGVA…MSSQ). Positions 129 to 235 (RVTATLWEDE…HNIGGLLYHP (107 aa)) constitute an HTH APSES-type domain. Residues 163–184 (GTKLLNVAGMTRGRRDGILKSE) constitute a DNA-binding region (H-T-H motif). Disordered regions lie at residues 246–480 (QESQ…ASRS) and 498–635 (SQLT…PRRR). Low complexity-rich tracts occupy residues 276-294 (MQTS…SSQP) and 312-325 (SASS…QSSS). Over residues 326-355 (YDWNNQGMNSGVPNTQPLSIDTTLSNTRSM) the composition is skewed to polar residues. Low complexity predominate over residues 356-380 (PTTPATTPPGNNLQGMQSYQSQSGY). Over residues 460–469 (APEHESEYVQ) the composition is skewed to basic and acidic residues. Composition is skewed to polar residues over residues 498 to 513 (SQLT…QNGS) and 539 to 571 (AASS…TAPT). The segment at 582–605 (KRGREDDDMGRPDSQGDYESKRRR) is nuclear localization domain. Residues 583–592 (RGREDDDMGR) show a composition bias toward basic and acidic residues.

This sequence belongs to the EFG1/PHD1/stuA family.

Functionally, transcription factor that regulates asexual reproduction. Binds the StuA-response elements (StRE) with the consensus sequence 5'-(A/T)CGCG(T/A)N(A/C)-3' at the promoters of target genes. Controls the expression of 6 secondary metabolite biosynthetic clusters including 2 involved in the synthesis of alkaloids (fumigaclavine and fumitremorgen), 2 clusters of the ETP class (gliotoxin and an unknown ETP-like toxin), a cluster predicted to produce pseurotin A, and the product of the last cluster is unknown. Controls the production of ergot alkaloids during conidiophore development. Controls expression of sspA and gliP. Involved in the induction of immunoglobulin E-independent mast cell degranulation. This chain is Cell pattern formation-associated protein stuA, found in Aspergillus fumigatus (strain ATCC MYA-4609 / CBS 101355 / FGSC A1100 / Af293) (Neosartorya fumigata).